We begin with the raw amino-acid sequence, 435 residues long: E3 ubiquitin-protein ligase PUB22 (435 aa).

One can recognise a U-box domain in the interval Glu-6–Tyr-81.

As to quaternary structure, interacts with RPN12A. Binds to EXO70B2. Auto-ubiquitinated leading to degradation via the 26S proteasome. This Auto-ubiquitination is repressed by the bacterial elicitor flg22 thus leading to a transiently increased protein stabilization and accumulation.

The protein resides in the cytoplasm. The catalysed reaction is S-ubiquitinyl-[E2 ubiquitin-conjugating enzyme]-L-cysteine + [acceptor protein]-L-lysine = [E2 ubiquitin-conjugating enzyme]-L-cysteine + N(6)-ubiquitinyl-[acceptor protein]-L-lysine.. It functions in the pathway protein modification; protein ubiquitination. E3 ubiquitin-protein ligase that negatively regulates water stress response. May control in coordination with PUB23 a drought signaling pathway by ubiquitinating cytosolic RPN12a. Acts as a negative regulator of the immunity triggered by the pathogen-associated molecular patterns (PAMPs), in association with PUB23 and PUB24. Regulates EXO70B2 ubiquitination and degradation via the 26S proteasome to attenuate PAMP-induced signaling. The protein is E3 ubiquitin-protein ligase PUB22 of Arabidopsis thaliana (Mouse-ear cress).